The primary structure comprises 259 residues: 5'-nucleotidase SurE (259 aa).

A divalent metal cation contacts are provided by Asp-8, Asp-9, Ser-41, and Asn-100.

It belongs to the SurE nucleotidase family. A divalent metal cation is required as a cofactor.

It localises to the cytoplasm. It catalyses the reaction a ribonucleoside 5'-phosphate + H2O = a ribonucleoside + phosphate. Nucleotidase that shows phosphatase activity on nucleoside 5'-monophosphates. This Natranaerobius thermophilus (strain ATCC BAA-1301 / DSM 18059 / JW/NM-WN-LF) protein is 5'-nucleotidase SurE.